Here is a 151-residue protein sequence, read N- to C-terminus: Protein ECM12 (151 aa).

Residue N2 is glycosylated (N-linked (GlcNAc...) asparagine). The next 2 membrane-spanning stretches (helical) occupy residues 17 to 37 (LLVFYFHIKQQAIMPFFIFFF) and 51 to 71 (AFLAKHVFVGVCSPFFVVGFF). 2 N-linked (GlcNAc...) asparagine glycosylation sites follow: N132 and N137.

The protein localises to the membrane. Its function is as follows. May be involved in cell wall organization and biogenesis. The sequence is that of Protein ECM12 (ECM12) from Saccharomyces cerevisiae (strain ATCC 204508 / S288c) (Baker's yeast).